The following is a 140-amino-acid chain: Putative pre-16S rRNA nuclease (140 aa).

This sequence belongs to the YqgF nuclease family.

It is found in the cytoplasm. In terms of biological role, could be a nuclease involved in processing of the 5'-end of pre-16S rRNA. The sequence is that of Putative pre-16S rRNA nuclease from Aeromonas hydrophila.